Consider the following 707-residue polypeptide: Alpha-hemolysin translocation ATP-binding protein HlyB (707 aa).

The Peptidase C39 domain occupies 3–125; it reads SCHKIDYGLY…ALYQGHIILI (123 aa). Residue His-83 is part of the active site. Residues 154–436 enclose the ABC transmembrane type-1 domain; that stretch reads FIETLVVSVF…LAQIWQDFQQ (283 aa). A run of 5 helical transmembrane segments spans residues 158–178, 191–211, 269–289, 295–315, and 388–408; these read LVVSVFLQLFALITPLFFQVV, LNVITVALSVVVVFEIILSGL, ALTSVLDLLFSLIFFAVMWYY, LVILFSLPCYAAWSVFISPIL, and VMIINLWLGAHLVISGDLSIG. In terms of domain architecture, ABC transporter spans 468 to 703; that stretch reads ITFRNIRFRY…PESLYSYLYQ (236 aa). 502–509 contributes to the ATP binding site; it reads GRSGSGKS.

Belongs to the ABC transporter superfamily. Protein-1 exporter (TC 3.A.1.109) family. In terms of assembly, homodimer.

The protein resides in the cell inner membrane. Its function is as follows. Part of the ABC transporter complex HlyBD involved in hemolysin export. Transmembrane domains (TMD) form a pore in the inner membrane and the ATP-binding domain (NBD) is responsible for energy generation. This Escherichia coli protein is Alpha-hemolysin translocation ATP-binding protein HlyB (hlyB).